Consider the following 95-residue polypeptide: Large ribosomal subunit protein uL22c (95 aa).

Belongs to the universal ribosomal protein uL22 family. Part of the 50S ribosomal subunit.

It is found in the plastid. It localises to the chloroplast. Functionally, this protein binds specifically to 23S rRNA. Its function is as follows. The globular domain of the protein is located near the polypeptide exit tunnel on the outside of the subunit, while an extended beta-hairpin is found that lines the wall of the exit tunnel in the center of the 70S ribosome. This is Large ribosomal subunit protein uL22c (rpl22) from Cyanidioschyzon merolae (strain NIES-3377 / 10D) (Unicellular red alga).